The primary structure comprises 84 residues: NAD(P)H-quinone oxidoreductase subunit O (84 aa).

Belongs to the complex I NdhO subunit family. In terms of assembly, NDH-1 can be composed of about 15 different subunits; different subcomplexes with different compositions have been identified which probably have different functions.

It localises to the cellular thylakoid membrane. The catalysed reaction is a plastoquinone + NADH + (n+1) H(+)(in) = a plastoquinol + NAD(+) + n H(+)(out). It catalyses the reaction a plastoquinone + NADPH + (n+1) H(+)(in) = a plastoquinol + NADP(+) + n H(+)(out). Functionally, NDH-1 shuttles electrons from an unknown electron donor, via FMN and iron-sulfur (Fe-S) centers, to quinones in the respiratory and/or the photosynthetic chain. The immediate electron acceptor for the enzyme in this species is believed to be plastoquinone. Couples the redox reaction to proton translocation, and thus conserves the redox energy in a proton gradient. Cyanobacterial NDH-1 also plays a role in inorganic carbon-concentration. This Parasynechococcus marenigrum (strain WH8102) protein is NAD(P)H-quinone oxidoreductase subunit O.